The primary structure comprises 655 residues: Archaeal Lon protease (655 aa).

Residues 1-123 (MEENIESVEE…KAEREKRDRS (123 aa)) lie on the Cytoplasmic side of the membrane. 57–64 (GEPGTGKS) contributes to the ATP binding site. Residues 124–144 (RSIMFVIFSVVLLGIIAAIVL) traverse the membrane as a helical segment. Residue Arg145 is a topological domain, extracellular. Residues 146 to 166 (SITLIFFAIMAAAFLYMAMAF) form a helical membrane-spanning segment. Residues 167–655 (NPVIRNEKAM…ASTRAGQNVA (489 aa)) lie on the Cytoplasmic side of the membrane. The 186-residue stretch at 433 to 618 (GSVVGMVNGL…EDVLKVALVN (186 aa)) folds into the Lon proteolytic domain. Catalysis depends on residues Ser525 and Lys568.

Belongs to the peptidase S16 family. Archaeal LonB subfamily. Homohexamer. Organized in a ring with a central cavity.

It is found in the cell membrane. Its function is as follows. ATP-dependent serine protease that mediates the selective degradation of mutant and abnormal proteins as well as certain short-lived regulatory proteins. Degrades polypeptides processively. The chain is Archaeal Lon protease from Thermoplasma volcanium (strain ATCC 51530 / DSM 4299 / JCM 9571 / NBRC 15438 / GSS1).